We begin with the raw amino-acid sequence, 87 residues long: Large ribosomal subunit protein bL31B (87 aa).

The protein belongs to the bacterial ribosomal protein bL31 family. Type B subfamily. Part of the 50S ribosomal subunit.

The polypeptide is Large ribosomal subunit protein bL31B (Paraburkholderia phymatum (strain DSM 17167 / CIP 108236 / LMG 21445 / STM815) (Burkholderia phymatum)).